A 482-amino-acid polypeptide reads, in one-letter code: Aspartic proteinase 36 (482 aa).

A signal peptide spans 1-27 (MVTTMDPSRISRIVAVVFVLVIQVVSG). The N-linked (GlcNAc...) asparagine glycan is linked to N32. The Peptidase A1 domain occupies 78 to 429 (YFTKIKLGSP…DLENEVIGWA (352 aa)). The active site involves D96. N178, N204, and N226 each carry an N-linked (GlcNAc...) asparagine glycan. D310 is an active-site residue. A disulfide bond links C347 and C388. N432 carries an N-linked (GlcNAc...) asparagine glycan. Residue S456 is the site of GPI-anchor amidated serine attachment. A propeptide spans 457–482 (AASSVMNGTLVTLLSILIWVFHSFTS) (removed in mature form). N463 is a glycosylation site (N-linked (GlcNAc...) asparagine).

It belongs to the peptidase A1 family. In terms of tissue distribution, highly expressed in pollen and pollen tubes. Mostly expressed in roots, flowers and inflorescence, and at lower levels in stems, seedlings and siliques.

It localises to the cell membrane. The protein resides in the cytoplasm. It is found in the cytosol. In terms of biological role, displays aspartic proteolytic activity. Together with A39, contributes to pollen and ovule development, including the apical cell wall constitution of the growing pollen tubes. This Arabidopsis thaliana (Mouse-ear cress) protein is Aspartic proteinase 36.